Reading from the N-terminus, the 471-residue chain is Galactolipase DONGLE, chloroplastic (471 aa).

The transit peptide at 1 to 88 (MAAKVFTQNP…PLSRVWREIQ (88 aa)) directs the protein to the chloroplast. The tract at residues 44-71 (SSSTMSPPISSSPLSLPSSSSSQAIPPS) is disordered. The GXSXG signature appears at 284–288 (GHSMG). Catalysis depends on Ser-286, which acts as the Acyl-ester intermediate. Catalysis depends on charge relay system residues Asp-349 and His-400.

It belongs to the AB hydrolase superfamily. Lipase family. As to expression, expressed in leaves and seedlings. Not detected in flowers, siliques or roots.

Its subcellular location is the plastid. It localises to the chloroplast. The catalysed reaction is a 1,2-diacyl-3-O-(beta-D-galactosyl)-sn-glycerol + 2 H2O = 3-beta-D-galactosyl-sn-glycerol + 2 a fatty acid + 2 H(+). It catalyses the reaction a 1,2-diacyl-sn-glycero-3-phosphocholine + H2O = a 2-acyl-sn-glycero-3-phosphocholine + a fatty acid + H(+). The enzyme catalyses a 1,2-diacyl-3-O-[alpha-D-galactosyl-(1-&gt;6)-beta-D-galactosyl]-sn-glycerol + H2O = acyl-3-O-[alpha-D-galactosyl-(1-&gt;6)-beta-D-galactosyl]-sn-glycerol + a fatty acid + H(+). Functionally, sn-1-specific phospholipase that releases free fatty acids from phosphatidylcholine. Has a higher galactolipase activity than phospholipase A1 activity when digalactosyldiacylglycerol (DGDG) is used as substrate. Catalyzes the initial step of jasmonic acid biosynthesis. Required for the biosynthesis of basal-level endogenous jasmonate in vegetative tissues. Regulates leaves growth. Not essential for jasmonate biosynthesis after wounding or upon pathogen infection. The polypeptide is Galactolipase DONGLE, chloroplastic (Arabidopsis thaliana (Mouse-ear cress)).